Here is a 301-residue protein sequence, read N- to C-terminus: Sulfate adenylyltransferase subunit 2 (301 aa).

Belongs to the PAPS reductase family. CysD subfamily. As to quaternary structure, heterodimer composed of CysD, the smaller subunit, and CysN.

It carries out the reaction sulfate + ATP + H(+) = adenosine 5'-phosphosulfate + diphosphate. The protein operates within sulfur metabolism; hydrogen sulfide biosynthesis; sulfite from sulfate: step 1/3. Functionally, with CysN forms the ATP sulfurylase (ATPS) that catalyzes the adenylation of sulfate producing adenosine 5'-phosphosulfate (APS) and diphosphate, the first enzymatic step in sulfur assimilation pathway. APS synthesis involves the formation of a high-energy phosphoric-sulfuric acid anhydride bond driven by GTP hydrolysis by CysN coupled to ATP hydrolysis by CysD. The chain is Sulfate adenylyltransferase subunit 2 from Geotalea daltonii (strain DSM 22248 / JCM 15807 / FRC-32) (Geobacter daltonii).